Consider the following 84-residue polypeptide: Large ribosomal subunit protein bL28 (84 aa).

It belongs to the bacterial ribosomal protein bL28 family.

The sequence is that of Large ribosomal subunit protein bL28 from Deinococcus geothermalis (strain DSM 11300 / CIP 105573 / AG-3a).